A 440-amino-acid polypeptide reads, in one-letter code: Adenylosuccinate synthetase (440 aa).

GTP is bound by residues 11–17 and 39–41; these read GDEGKGG and GHT. The Proton acceptor role is filled by Asp-12. Mg(2+) contacts are provided by Asp-12 and Gly-39. IMP contacts are provided by residues 12–15, 37–40, Thr-127, Arg-141, Gln-230, Thr-245, and Arg-311; these read DEGK and NAGH. His-40 acts as the Proton donor in catalysis. 307–313 provides a ligand contact to substrate; sequence TVTGRPR. Residues Arg-313, 339-341, and 424-426 each bind GTP; these read HLD and GVG.

The protein belongs to the adenylosuccinate synthetase family. In terms of assembly, homodimer. Mg(2+) serves as cofactor.

It is found in the cytoplasm. It catalyses the reaction IMP + L-aspartate + GTP = N(6)-(1,2-dicarboxyethyl)-AMP + GDP + phosphate + 2 H(+). It participates in purine metabolism; AMP biosynthesis via de novo pathway; AMP from IMP: step 1/2. Its function is as follows. Plays an important role in the de novo pathway of purine nucleotide biosynthesis. Catalyzes the first committed step in the biosynthesis of AMP from IMP. The sequence is that of Adenylosuccinate synthetase from Halobacterium salinarum (strain ATCC 29341 / DSM 671 / R1).